Here is a 142-residue protein sequence, read N- to C-terminus: uncharacterized protein (142 aa).

The region spanning 18–137 (QSRSYSCGPA…RIFTGNVLVV (120 aa)) is the Peptidase C39 domain.

This is an uncharacterized protein from Methanothermobacter thermautotrophicus (strain ATCC 29096 / DSM 1053 / JCM 10044 / NBRC 100330 / Delta H) (Methanobacterium thermoautotrophicum).